The primary structure comprises 298 residues: N-acetylmuramic acid 6-phosphate etherase (298 aa).

Positions 55 to 218 (IHAQVSGGGR…STGLMIKSGK (164 aa)) constitute an SIS domain. The active-site Proton donor is the Glu-83. The active site involves Glu-114.

This sequence belongs to the GCKR-like family. MurNAc-6-P etherase subfamily. Homodimer.

The catalysed reaction is N-acetyl-D-muramate 6-phosphate + H2O = N-acetyl-D-glucosamine 6-phosphate + (R)-lactate. It participates in amino-sugar metabolism; 1,6-anhydro-N-acetylmuramate degradation. It functions in the pathway amino-sugar metabolism; N-acetylmuramate degradation. Its pathway is cell wall biogenesis; peptidoglycan recycling. Its function is as follows. Specifically catalyzes the cleavage of the D-lactyl ether substituent of MurNAc 6-phosphate, producing GlcNAc 6-phosphate and D-lactate. Together with AnmK, is also required for the utilization of anhydro-N-acetylmuramic acid (anhMurNAc) either imported from the medium or derived from its own cell wall murein, and thus plays a role in cell wall recycling. This Shigella boydii serotype 18 (strain CDC 3083-94 / BS512) protein is N-acetylmuramic acid 6-phosphate etherase.